Reading from the N-terminus, the 194-residue chain is Naphthalene 1,2-dioxygenase system, small oxygenase component (194 aa).

The protein belongs to the bacterial ring-hydroxylating dioxygenase beta subunit family. As to quaternary structure, the naphthalene dioxygenase (NDO) multicomponent enzyme system is composed of an electron transfer component and a dioxygenase component (iron sulfur protein (ISP)). The electron transfer component is composed of a ferredoxin reductase (NagAa) and a ferredoxin (NagAb), and the dioxygenase component is formed by a large alpha subunit (NagAc) and a small beta subunit (NagAd).

It functions in the pathway aromatic compound metabolism; naphthalene degradation. Its function is as follows. Component of the naphthalene dioxygenase (NDO) multicomponent enzyme system which catalyzes the incorporation of both atoms of molecular oxygen into naphthalene to form cis-(1R,2S)-dihydroxy-1,2-dihydronaphthalene. Also able to use styrene as substrate. The beta subunit seems to have a structural role in the holoenzyme. This Ralstonia sp protein is Naphthalene 1,2-dioxygenase system, small oxygenase component.